A 301-amino-acid chain; its full sequence is MKKIILTIGCPGSGKSTWAREFIAKNPGFYNINRDDYRQSIMAHEERDEYKYTKKKEGIVTGMQFDTAKSILYGGDSVKGVIISDTNLNPERRLAWETFAKEYGWKVEHKVFDVPWTELVKRNSKRGTKAVPIDVLRSMYKSMREYLGLPVYNGTPGKPKAVIFDVDGTLAKMNGRGPYDLEKCDTDVINPMVVELSKMYALMGYQIVVVSGRESGTKEDPTKYYRMTRKWVEDIAGVPLVMQCQREQGDTRKDDVVKEEIFWKHIAPHFDVKLAIDDRTQVVEMWRRIGVECWQVASGDF.

Homotetramer. It depends on Mg(2+) as a cofactor.

The enzyme catalyses a 5'-end dephospho-2'-deoxyribonucleoside-DNA + ATP = a 5'-end 5'-phospho-2'-deoxyribonucleoside-DNA + ADP + H(+). It catalyses the reaction a 2'-deoxyribonucleoside 3'-phosphate + H2O = a 2'-deoxyribonucleoside + phosphate. Functionally, acts as a 5'-hydroxyl kinase, a 3'-phosphatase and a 2',3'-cyclic phosphodiesterase. Catalyzes the transfer of the terminal phosphate of ATP to the 5'-hydroxyl termini of ribo- and deoxyribonucleotides. In the presence of ADP the enzyme also catalyzes an exchange reaction. In the exchange reaction, an excess ADP causes the enzyme to transfer the 5' terminal phosphate from phosphorylated DNA to ADP. Involved in countering a host defense mechanism which activates T4-induced anticodon nuclease and shuts off viral translation. The polynucleotide kinase modifies the ends of nicked tRNA generated by the antiviral response of the host bacteria and facilitates repair by T4 RNA ligase. The polypeptide is Polynucleotide kinase (pseT) (Escherichia coli (Bacteriophage T4)).